Reading from the N-terminus, the 631-residue chain is MNKTAANNQRIMPIVKDAFRIHANPFPWKKAIGSGFASGFPVLVGALAGHTDYGLIASIGGFVYLYAGGESYKKRALKLLLVSIGIALSFGLGTLLSGMLWMMAAVLGLIGAAAMFIFSALGIQGPAPMFFVLAFLVSSGLPADPSQALFRAGLTFLGGIFAMGIALIGWLWNKHGPEGAVLQKTYHQLAACLSAVGTPGFHNAQHQTVLMLRTARQTVLGKGNRRKKSRHDERFFRLLEKADDIFIAIIHFSAETPDRETAQIEKALRQTGDMLANARVFNTFQINENESEPRRKLFEEINEVLYIASGRFDKQLDGEPSRLPSSFYFLRNAFDWKSPVLIRALKYGIVLFAADMFALAFGFARSYWIPLSAAAVMLGTTVVFTLHRAIQRSAGTVIGVILAGAILFFKPGGVYIAFCIAALQCLLEMLIVRNYALAVPFLTANALVITESMHGGAGAGYFMIARLTDVAVGSVIGLLGTMLLWRRFSTKRLPELVRNVIRLEGQFMEKLLTGQIADEHKLRVSLVRLRDAYDKALGEFPHANADALWPAISGAQHLGYYLLSAQAHRRPSAPFSDEEINQLRAFFEQAEQSFIMKRMPADIQVPHVPHYPRISKELSALYSGLRTAFEK.

The next 9 helical transmembrane spans lie at 42–62, 76–96, 106–128, 152–172, 344–364, 366–386, 398–418, 429–449, and 464–484; these read VLVGALAGHTDYGLIASIGGF, ALKLLLVSIGIALSFGLGTLL, VLGLIGAAAMFIFSALGIQGPAP, AGLTFLGGIFAMGIALIGWLW, ALKYGIVLFAADMFALAFGFA, SYWIPLSAAAVMLGTTVVFTL, IGVILAGAILFFKPGGVYIAF, MLIVRNYALAVPFLTANALVI, and IARLTDVAVGSVIGLLGTMLL.

Belongs to the YccS/YhfK family.

The protein localises to the cell membrane. This is an uncharacterized protein from Bacillus subtilis (strain 168).